Reading from the N-terminus, the 174-residue chain is Protein C (174 aa).

This sequence belongs to the morbillivirus protein C family.

The polypeptide is Protein C (P/V/C) (Phocine distemper virus (PDV)).